The chain runs to 204 residues: MSQPITRILKIDSSARAESSMSRKLAQQLTEQLIAANPGAEVVSRDVSGGLPFVTEEWIGASYTPADQRTEAQNQALALSDSLIEEVQAADTLVIAVPMYNFSVPATLKAYIDQICRAQVTFRYTEQGPVGLLENKKAYVVTVTGGTPVNSAADFVSAYMRQVLGFIGIKDVTFINADRIMVDPESILADAQQQIAAATEVAAA.

FMN is bound by residues Ser-14, 20–22, and 99–102; these read SMS and MYNF.

Belongs to the azoreductase type 1 family. In terms of assembly, homodimer. FMN is required as a cofactor.

It carries out the reaction 2 a quinone + NADH + H(+) = 2 a 1,4-benzosemiquinone + NAD(+). It catalyses the reaction N,N-dimethyl-1,4-phenylenediamine + anthranilate + 2 NAD(+) = 2-(4-dimethylaminophenyl)diazenylbenzoate + 2 NADH + 2 H(+). Functionally, quinone reductase that provides resistance to thiol-specific stress caused by electrophilic quinones. Also exhibits azoreductase activity. Catalyzes the reductive cleavage of the azo bond in aromatic azo compounds to the corresponding amines. The polypeptide is FMN-dependent NADH:quinone oxidoreductase 1 (Hahella chejuensis (strain KCTC 2396)).